Consider the following 633-residue polypeptide: FAD-binding monooxygenase andJ (633 aa).

Residues 117-120 (TWYW), 129-130 (DT), and Y135 contribute to the FAD site. 127–129 (MCD) is a binding site for NADP(+). NADP(+)-binding positions include 269–275 (TGASAVQ) and 292–293 (RT).

This sequence belongs to the FAD-binding monooxygenase family. FAD is required as a cofactor.

It participates in secondary metabolite biosynthesis; terpenoid biosynthesis. FAD-binding monooxygenase; part of the gene cluster that mediates the biosynthesis of anditomin, a fungal meroterpenoid. The first step of the pathway is the synthesis of 3,5-dimethylorsellinic acid (DMOA) by the polyketide synthase andM. DMOA is then converted to the phthalide compound 5,7-dihydroxy-4,6-dimethylphthalide (DHDMP) by the cytochrome P450 monooxygenase andK, which is further prenylated by the prenyltransferase andD to yield farnesyl-DHDMP. Further epoxidation by the FAD-dependent monooxygenase andE leads to epoxyfarnesyl-DHDMP. The next step involves the terpene cyclase andB that converts epoxyfarnesyl-DHDMP into preandiloid A through opening of the epoxide ring followed by the cyclization of the farnesyl moiety. Preandiloid A is in turn oxidized at the C-3 hydroxyl group to yield preandiloid B by the dehydrogenase andC. The dioxygenase andA is solely responsible for the dehydrogenation of preandiloid B leading to the enone preandiloid C, as well as for the intriguing structural rearrangement to generate the bicyclo[2.2.2]octane core, transforming preandiloid C into andiconin. FAD-binding monooxygenase andJ then produces andilesin D which is reduced by dehydrogenase andI to yield andilesin A. Action of acetyltransferase andG followed by a spontaneous acetate elimination leads then to andilesin B, which is in turn substrate of the short chain dehydrogenase andH to yield andilesin C. Finally, the dioxygenase andF catalyzes the transformation of andilesin C to anditomin. The polypeptide is FAD-binding monooxygenase andJ (Emericella variicolor (Aspergillus stellatus)).